The sequence spans 441 residues: uncharacterized protein (441 aa).

217 to 224 (GETGTGKT) is a binding site for ATP.

Belongs to the GSP E family.

This is an uncharacterized protein from Bacillus anthracis.